Consider the following 324-residue polypeptide: Beta-ketoacyl-[acyl-carrier-protein] synthase III (324 aa).

Residues Cys-112 and His-249 contribute to the active site. The segment at 250–254 (QANRR) is ACP-binding. Asn-279 is a catalytic residue.

The protein belongs to the thiolase-like superfamily. FabH family. Homodimer.

The protein resides in the cytoplasm. It catalyses the reaction malonyl-[ACP] + acetyl-CoA + H(+) = 3-oxobutanoyl-[ACP] + CO2 + CoA. It participates in lipid metabolism; fatty acid biosynthesis. Functionally, catalyzes the condensation reaction of fatty acid synthesis by the addition to an acyl acceptor of two carbons from malonyl-ACP. Catalyzes the first condensation reaction which initiates fatty acid synthesis and may therefore play a role in governing the total rate of fatty acid production. Possesses both acetoacetyl-ACP synthase and acetyl transacylase activities. Its substrate specificity determines the biosynthesis of branched-chain and/or straight-chain of fatty acids. This is Beta-ketoacyl-[acyl-carrier-protein] synthase III from Streptococcus pyogenes serotype M49 (strain NZ131).